Reading from the N-terminus, the 127-residue chain is Large ribosomal subunit protein uL18 (127 aa).

It belongs to the universal ribosomal protein uL18 family. In terms of assembly, part of the 50S ribosomal subunit; part of the 5S rRNA/L5/L18/L25 subcomplex. Contacts the 5S and 23S rRNAs.

In terms of biological role, this is one of the proteins that bind and probably mediate the attachment of the 5S RNA into the large ribosomal subunit, where it forms part of the central protuberance. This Streptomyces avermitilis (strain ATCC 31267 / DSM 46492 / JCM 5070 / NBRC 14893 / NCIMB 12804 / NRRL 8165 / MA-4680) protein is Large ribosomal subunit protein uL18.